A 270-amino-acid polypeptide reads, in one-letter code: Phospholysine phosphohistidine inorganic pyrophosphate phosphatase (270 aa).

Mg(2+) contacts are provided by Asp14 and Ser16. Substrate is bound by residues 14 to 16 (DVS), 52 to 53 (TN), and Lys187. Asp212 is a Mg(2+) binding site.

The protein belongs to the HAD-like hydrolase superfamily. Mg(2+) serves as cofactor.

It is found in the cytoplasm. The protein resides in the nucleus. The catalysed reaction is diphosphate + H2O = 2 phosphate + H(+). Functionally, phosphatase that hydrolyzes imidodiphosphate, 3-phosphohistidine and 6-phospholysine. Has broad substrate specificity and can also hydrolyze inorganic diphosphate, but with lower efficiency. This is Phospholysine phosphohistidine inorganic pyrophosphate phosphatase (lhpp) from Xenopus laevis (African clawed frog).